A 286-amino-acid polypeptide reads, in one-letter code: 33 kDa chaperonin (286 aa).

2 disulfide bridges follow: Cys-225–Cys-227 and Cys-258–Cys-261.

Belongs to the HSP33 family. Post-translationally, under oxidizing conditions two disulfide bonds are formed involving the reactive cysteines. Under reducing conditions zinc is bound to the reactive cysteines and the protein is inactive.

The protein resides in the cytoplasm. In terms of biological role, redox regulated molecular chaperone. Protects both thermally unfolding and oxidatively damaged proteins from irreversible aggregation. Plays an important role in the bacterial defense system toward oxidative stress. In Shewanella baltica (strain OS223), this protein is 33 kDa chaperonin.